The primary structure comprises 95 residues: Small ribosomal subunit protein bS6 (95 aa).

Belongs to the bacterial ribosomal protein bS6 family.

In terms of biological role, binds together with bS18 to 16S ribosomal RNA. The protein is Small ribosomal subunit protein bS6 of Clostridium novyi (strain NT).